A 450-amino-acid chain; its full sequence is Equilibrative nucleotide transporter 1 (450 aa).

11 helical membrane passes run 63 to 83, 101 to 121, 133 to 153, 168 to 188, 196 to 216, 234 to 254, 300 to 320, 334 to 354, 361 to 381, 394 to 414, and 430 to 450; these read FAYI…NAFI, IFAV…VVFY, LGLL…LVYV, AAVA…IGVA, MQAV…LRIL, LYFA…NVAH, HGFG…GYIT, ILLI…TAVF, IAVG…GCLH, ILTC…MILA, and TVMF…FWVI.

This sequence belongs to the SLC29A/ENT transporter (TC 2.A.57) family. In terms of tissue distribution, in young seedlings, expressed in root elongation zone, root cortex, root-hair, at the transition to the shoot and cotyledons. Expressed in hydathodes of fully developed leaves and pollen.

It is found in the vacuole membrane. Its function is as follows. Nucleoside transporter involved in adenosine transport and required for nucleotide metabolism which influences growth and pollen germination. Has high affinity for adenosine when expressed in a heterologous system (yeast). The sequence is that of Equilibrative nucleotide transporter 1 (ENT1) from Arabidopsis thaliana (Mouse-ear cress).